Here is a 74-residue protein sequence, read N- to C-terminus: U4-theraphotoxin-Cg1a (74 aa).

A signal peptide spans 1–19 (MNATIFALLLLLNLAMHNA). A propeptide spanning residues 20–39 (AEQSSETDMDDTLLIPEINR) is cleaved from the precursor. Intrachain disulfides connect Cys-42–Cys-56, Cys-49–Cys-61, and Cys-55–Cys-71.

The protein belongs to the neurotoxin 36 family. 01 subfamily. Expressed by the venom gland.

The protein resides in the secreted. In terms of biological role, probable ion channel inhibitor. The chain is U4-theraphotoxin-Cg1a from Chilobrachys guangxiensis (Chinese earth tiger tarantula).